A 378-amino-acid chain; its full sequence is Putative methyltransferase spot-1 (378 aa).

Belongs to the class IV-like SAM-binding methyltransferase superfamily.

It is found in the cytoplasm. The protein resides in the cytoskeleton. It localises to the spindle. Its subcellular location is the chromosome. The protein localises to the centromere. It is found in the kinetochore. The protein resides in the microtubule organizing center. It localises to the centrosome. Functionally, required for association of the centrosomes with the poles of the bipolar mitotic spindle during metaphase. This is Putative methyltransferase spot-1 from Caenorhabditis elegans.